Here is a 338-residue protein sequence, read N- to C-terminus: Cap-specific mRNA (nucleoside-2'-O-)-methyltransferase (338 aa).

Tyr-22 serves as a coordination point for mRNA. S-adenosyl-L-methionine-binding residues include Gln-39, Tyr-66, Gly-68, Gly-72, Asp-95, Arg-97, Val-116, and Asp-138. The segment at 169 to 249 (PAASSLKWRC…NKIIRNRIII (81 aa)) is binding to NPH-I. A binding to Rap94 region spans residues 169-333 (PAASSLKWRC…NTKKSVRGNK (165 aa)). Lys-175 (for methyltransferase activity) is an active-site residue. Residues 177 to 180 (RCPF), Asp-182, 205 to 207 (SAE), and Glu-233 contribute to the mRNA site. A disordered region spans residues 305-338 (HHEPTQRKVPSKNTMLKSRNTKKSVRGNKQGRRT). Over residues 323–338 (RNTKKSVRGNKQGRRT) the composition is skewed to basic residues.

Belongs to the class I-like SAM-binding methyltransferase superfamily. Poxvirus/kinetoplastid 2'-O-MTase family. As to quaternary structure, interacts with poly(A) polymerase catalytic subunit OPG063. Interacts with OPG109 and OPG123; these interactions might help linking transcription to capping and polyadenylation.

It is found in the virion. It catalyses the reaction a 5'-end (N(7)-methyl 5'-triphosphoguanosine)-ribonucleoside in mRNA + S-adenosyl-L-methionine = a 5'-end (N(7)-methyl 5'-triphosphoguanosine)-(2'-O-methyl-ribonucleoside) in mRNA + S-adenosyl-L-homocysteine + H(+). Displays methyltransferase, positive regulation of the poly(A) polymerase and transcription elongation activities. Involved in the modification of both mRNA ends and in intermediate and late gene positive transcription elongation. At the mRNAs 5' end, methylates the ribose 2' OH group of the first transcribed nucleotide, thereby producing a 2'-O-methylpurine cap. At the 3' end, functions as a processivity factor which stimulates the activity of the viral poly(A) polymerase OPG063 that creates mRNA's poly(A) tail. In the presence of OPG102, OPG063 does not dissociate from the RNA allowing tail elongation to around 250 adenylates. This is Cap-specific mRNA (nucleoside-2'-O-)-methyltransferase (OPG102) from Oryctolagus cuniculus (Rabbit).